The primary structure comprises 309 residues: 2-phospho-L-lactate transferase (309 aa).

7,8-didemethyl-8-hydroxy-5-deazariboflavin is bound by residues Asp-50 and Lys-89.

Belongs to the CofD family. As to quaternary structure, homodimer. The cofactor is Mg(2+).

The enzyme catalyses (2S)-lactyl-2-diphospho-5'-guanosine + 7,8-didemethyl-8-hydroxy-5-deazariboflavin = oxidized coenzyme F420-0 + GMP + H(+). It participates in cofactor biosynthesis; coenzyme F420 biosynthesis. Catalyzes the transfer of the 2-phospholactate moiety from (2S)-lactyl-2-diphospho-5'-guanosine to 7,8-didemethyl-8-hydroxy-5-deazariboflavin (FO) with the formation of oxidized coenzyme F420-0 and GMP. This Methanococcus maripaludis (strain C5 / ATCC BAA-1333) protein is 2-phospho-L-lactate transferase.